The chain runs to 181 residues: SecB-like chaperone Rv1957 (181 aa).

T2 is subject to N-acetylthreonine.

The protein belongs to the SecB-like family. As to quaternary structure, homotetramer, interacts with antitoxin HigA1.

In terms of biological role, chaperone component of an atypical, type II toxin-antitoxin chaperone (TAC) system. Prevents antitoxin HigA1 aggregation in vitro at a 1:3 chaperone:antitoxin ratio, probably also protects antitoxin HigA1 from protease. Required for neutralization of toxin HigB1 upon ectopic expression in Mycobacterium marinum or E.coli. When expressed in E.coli complements a secB deletion, restores export of OmpA and MBP and inhibits aggregation of proOmpC although it is less efficient than endogenous SecB. Complements the general chaperone function of E.coli SecB less well. This chain is SecB-like chaperone Rv1957 (secBL), found in Mycobacterium tuberculosis (strain ATCC 25618 / H37Rv).